Here is a 248-residue protein sequence, read N- to C-terminus: Probable transcriptional regulatory protein NGR_c27950 (248 aa).

The protein belongs to the TACO1 family.

The protein resides in the cytoplasm. In Sinorhizobium fredii (strain NBRC 101917 / NGR234), this protein is Probable transcriptional regulatory protein NGR_c27950.